Consider the following 91-residue polypeptide: MDIKLINIGFGNIVSAHRVIAIVSPESSPIKRIITEAREKGQLIDATYGRRTRAVIIADSGHVILSAIQPETVANRFLLSRDVHDSSSSPC.

The protein belongs to the RemA family.

The polypeptide is Putative regulatory protein Cyan7425_4125 (Cyanothece sp. (strain PCC 7425 / ATCC 29141)).